A 148-amino-acid polypeptide reads, in one-letter code: Lysozyme C (148 aa).

An N-terminal signal peptide occupies residues 1–18 (MKALIILGLVLLSVTVQG). The 130-residue stretch at 19 to 148 (KIFERCELAR…VSQYVKGCGV (130 aa)) folds into the C-type lysozyme domain. Disulfide bonds link Cys24–Cys146, Cys48–Cys134, Cys83–Cys99, and Cys95–Cys113. Catalysis depends on residues Glu53 and Asp71.

The protein belongs to the glycosyl hydrolase 22 family. As to quaternary structure, monomer.

Its subcellular location is the secreted. The enzyme catalyses Hydrolysis of (1-&gt;4)-beta-linkages between N-acetylmuramic acid and N-acetyl-D-glucosamine residues in a peptidoglycan and between N-acetyl-D-glucosamine residues in chitodextrins.. In terms of biological role, lysozymes have primarily a bacteriolytic function; those in tissues and body fluids are associated with the monocyte-macrophage system and enhance the activity of immunoagents. This Nasalis larvatus (Proboscis monkey) protein is Lysozyme C (LYZ).